We begin with the raw amino-acid sequence, 132 residues long: Fatty acid-binding protein, brain (132 aa).

Residue Val2 is modified to N-acetylvaline. 127 to 129 (RCY) contacts a fatty acid.

The protein belongs to the calycin superfamily. Fatty-acid binding protein (FABP) family. Expressed in brain and other neural tissues.

The protein localises to the cytoplasm. Its function is as follows. B-FABP could be involved in the transport of a so far unknown hydrophobic ligand with potential morphogenic activity during CNS development. It is required for the establishment of the radial glial fiber system in developing brain, a system that is necessary for the migration of immature neurons to establish cortical layers. This chain is Fatty acid-binding protein, brain (Fabp7), found in Mus musculus (Mouse).